A 487-amino-acid chain; its full sequence is Mu-like prophage FluMu tail sheath protein (487 aa).

Belongs to the myoviridae tail sheath protein family.

In terms of biological role, major component of the tail. In Haemophilus influenzae (strain ATCC 51907 / DSM 11121 / KW20 / Rd), this protein is Mu-like prophage FluMu tail sheath protein.